Consider the following 748-residue polypeptide: Adenosylcobalamin-dependent ribonucleoside-triphosphate reductase (748 aa).

An intrachain disulfide couples Cys-123 to Cys-426. Residues 151 to 162 (SMPYSFMFDELM) are effector region-1. The interval 172–320 (TKDNIAKLPP…IGNLIGKTVV (149 aa)) is effector region-2. Catalysis depends on residues Cys-415 and Glu-417. Residues 572–633 (FHYAGYLIQR…DPAFASAGTV (62 aa)) are adenosylcobalamin-binding-1. The interval 692–733 (FKQAPKEPIDVKTYKQKCAAIHGSVAAVFAVQNADHDQKDLE) is adenosylcobalamin-binding-2.

The protein belongs to the class II ribonucleoside-triphosphate reductase family. As to quaternary structure, monomer. Adenosylcob(III)alamin serves as cofactor.

The catalysed reaction is a 2'-deoxyribonucleoside 5'-triphosphate + [thioredoxin]-disulfide + H2O = a ribonucleoside 5'-triphosphate + [thioredoxin]-dithiol. Allosterically regulated by ATP and dNTP. In Lacticaseibacillus paracasei (strain ATCC 334 / BCRC 17002 / CCUG 31169 / CIP 107868 / KCTC 3260 / NRRL B-441) (Lactobacillus paracasei), this protein is Adenosylcobalamin-dependent ribonucleoside-triphosphate reductase (rtpR).